The following is a 384-amino-acid chain: Glycine-rich cell wall structural protein 1 (384 aa).

The signal sequence occupies residues 1 to 27; sequence MGSSQKWVIGLLLFSSIFFELTAITLA.

It is found in the secreted. Its subcellular location is the cell wall. Functionally, responsible for plasticity of the cell wall. This chain is Glycine-rich cell wall structural protein 1 (GRP-1), found in Petunia hybrida (Petunia).